Here is a 434-residue protein sequence, read N- to C-terminus: Enolase (434 aa).

A (2R)-2-phosphoglycerate-binding site is contributed by Q165. The active-site Proton donor is the E207. Residues D244, E291, and D318 each coordinate Mg(2+). 4 residues coordinate (2R)-2-phosphoglycerate: K343, R372, S373, and K394. K343 (proton acceptor) is an active-site residue.

Belongs to the enolase family. Requires Mg(2+) as cofactor.

Its subcellular location is the cytoplasm. The protein resides in the secreted. The protein localises to the cell surface. The catalysed reaction is (2R)-2-phosphoglycerate = phosphoenolpyruvate + H2O. Its pathway is carbohydrate degradation; glycolysis; pyruvate from D-glyceraldehyde 3-phosphate: step 4/5. Catalyzes the reversible conversion of 2-phosphoglycerate (2-PG) into phosphoenolpyruvate (PEP). It is essential for the degradation of carbohydrates via glycolysis. The polypeptide is Enolase (Macrococcus caseolyticus (strain JCSC5402) (Macrococcoides caseolyticum)).